The chain runs to 93 residues: MKKLVLLFALVLLGFQVQADSIQNTDEETKTEEQPGEEDQAVSVSFGDPEGTSLQEESLRDLVCYCRSRGCKGRERMNGTCRKGHLLYTLCCR.

An N-terminal signal peptide occupies residues 1 to 19; it reads MKKLVLLFALVLLGFQVQA. Positions 20–58 are excised as a propeptide; it reads DSIQNTDEETKTEEQPGEEDQAVSVSFGDPEGTSLQEES. Residues 24 to 54 form a disordered region; that stretch reads NTDEETKTEEQPGEEDQAVSVSFGDPEGTSL. 3 disulfides stabilise this stretch: Cys-64–Cys-92, Cys-66–Cys-81, and Cys-71–Cys-91.

Belongs to the alpha-defensin family. As to expression, paneth cells of the small bowel.

The protein localises to the secreted. Its function is as follows. Probably contributes to the antimicrobial barrier function of the small bowel mucosa. Has antibacterial activity against attenuated mutants of S.typhimurium. The chain is Alpha-defensin 1 (Defa1) from Mus musculus (Mouse).